A 363-amino-acid polypeptide reads, in one-letter code: Galactokinase (363 aa).

Residue 16–19 (EHTD) participates in substrate binding. Residues S50 and 103 to 109 (GSGLSSS) each bind ATP. 2 residues coordinate Mg(2+): S109 and E141. D153 acts as the Proton acceptor in catalysis. Substrate is bound at residue Y205.

The protein belongs to the GHMP kinase family. GalK subfamily.

The protein localises to the cytoplasm. It carries out the reaction alpha-D-galactose + ATP = alpha-D-galactose 1-phosphate + ADP + H(+). It functions in the pathway carbohydrate metabolism; galactose metabolism. Functionally, catalyzes the transfer of the gamma-phosphate of ATP to D-galactose to form alpha-D-galactose-1-phosphate (Gal-1-P). The protein is Galactokinase of Mycobacterium bovis (strain ATCC BAA-935 / AF2122/97).